A 154-amino-acid chain; its full sequence is Ubiquitin-conjugating enzyme E2 L3 (154 aa).

A UBC core domain is found at 2-149; it reads AASRRLMKEL…AEEFTKKYGE (148 aa). Cysteine 86 serves as the catalytic Glycyl thioester intermediate. Residue lysine 131 is modified to N6-acetyllysine.

Belongs to the ubiquitin-conjugating enzyme family. As to quaternary structure, interacts with PRKN; involved in ubiquitination and degradation of misfolded proteins. Interacts with UBE3A. Interacts with CCNB1IP1, CBL, ZAP70, RNF19A, RNF19B and RNF144B. Interacts with ARIH1. Interacts with ARIH2 (via RING-type 1). Interacts with NCOA1; they functionally interact to regulate progesterone receptor transcriptional activity. Interacts with NDFIP1 (via N-terminus); the interaction mediates recruitment of UBE2L3 to ITCH and causes MAP3K7 ubiquitination. In terms of processing, ubiquitinated. The alteration of UBE2L3 protein levels during the S-phase of the cell cycle is due to ubiquitin-dependent proteasomal degradation. Autoubiquitinated in vitro.

It localises to the nucleus. The protein resides in the cytoplasm. The enzyme catalyses S-ubiquitinyl-[E1 ubiquitin-activating enzyme]-L-cysteine + [E2 ubiquitin-conjugating enzyme]-L-cysteine = [E1 ubiquitin-activating enzyme]-L-cysteine + S-ubiquitinyl-[E2 ubiquitin-conjugating enzyme]-L-cysteine.. The protein operates within protein modification; protein ubiquitination. Ubiquitin-conjugating enzyme E2 that specifically acts with HECT-type and RBR family E3 ubiquitin-protein ligases. Does not function with most RING-containing E3 ubiquitin-protein ligases because it lacks intrinsic E3-independent reactivity with lysine: in contrast, it has activity with the RBR family E3 enzymes, such as PRKN, RNF31 and ARIH1, that function like RING-HECT hybrids. Accepts ubiquitin from the E1 complex and catalyzes its covalent attachment to other proteins. Mediates ubiquitination by the CUL9-RBX1 complex. In vitro catalyzes 'Lys-11'-linked polyubiquitination. Involved in the selective degradation of short-lived and abnormal proteins. Down-regulated during the S-phase it is involved in progression through the cell cycle. Regulates nuclear hormone receptors transcriptional activity. May play a role in myelopoiesis. The sequence is that of Ubiquitin-conjugating enzyme E2 L3 (UBE2L3) from Pongo abelii (Sumatran orangutan).